The sequence spans 232 residues: Small ribosomal subunit protein uS3 (232 aa).

A KH type-2 domain is found at 39–107 (VRQYLTKALK…PAQINIAEVR (69 aa)).

It belongs to the universal ribosomal protein uS3 family. Part of the 30S ribosomal subunit. Forms a tight complex with proteins S10 and S14.

In terms of biological role, binds the lower part of the 30S subunit head. Binds mRNA in the 70S ribosome, positioning it for translation. This chain is Small ribosomal subunit protein uS3, found in Pseudoalteromonas atlantica (strain T6c / ATCC BAA-1087).